Reading from the N-terminus, the 302-residue chain is Monopolin complex subunit MAM1 (302 aa).

2 disordered regions span residues 53 to 83 (YHKE…QNNV) and 257 to 276 (TSEN…SKGK). Residues 257 to 268 (TSENPFSSSPNT) are compositionally biased toward polar residues.

Component of the monopolin complex composed of at least CSM1, LRS4 and MAM1. The complex associates with the kinetochore during late pachytene. Phosphorylated by CDC5. This phosphorylation is required for the location to the kinetochores during late pachytene.

It is found in the nucleus. Component of the monopolin complex which promotes monoorientation during meiosis I, required for chromosome segregation during meiosis. This Saccharomyces cerevisiae (strain ATCC 204508 / S288c) (Baker's yeast) protein is Monopolin complex subunit MAM1 (MAM1).